We begin with the raw amino-acid sequence, 551 residues long: Methionine--tRNA ligase (551 aa).

Residues 12–22 (PYANGPLHFGH) carry the 'HIGH' region motif. 4 residues coordinate Zn(2+): C144, C147, C157, and C160. Positions 330–334 (QFSKS) match the 'KMSKS' region motif. An ATP-binding site is contributed by K333.

The protein belongs to the class-I aminoacyl-tRNA synthetase family. MetG type 1 subfamily. In terms of assembly, monomer. It depends on Zn(2+) as a cofactor.

It localises to the cytoplasm. The enzyme catalyses tRNA(Met) + L-methionine + ATP = L-methionyl-tRNA(Met) + AMP + diphosphate. Functionally, is required not only for elongation of protein synthesis but also for the initiation of all mRNA translation through initiator tRNA(fMet) aminoacylation. This Chlamydia pneumoniae (Chlamydophila pneumoniae) protein is Methionine--tRNA ligase (metG).